A 2119-amino-acid chain; its full sequence is Outer kinetochore KNL1 complex subunit KNL1 (2119 aa).

Residues 1–59 form a disordered region; the sequence is MDGVYSEANEENDNTQRPVRRQHSSILKPPRSPLQDLKCGNQTNQEPNPPRKRKSSRRV. The may mediate oligomerization stretch occupies residues 1–202; the sequence is MDGVYSEANE…SDNFIKRLKT (202 aa). Interaction with microtubules regions lie at residues 17–34 and 53–80; these read RPVRRQHSSILKPPRSPL and RKSSRRVSFADTIKVFQTESHMKTERNS. The interaction with PP1CA; contains the protein phosphatase 1 (PP1) interaction motifs SILK, RVXF and phi-phi stretch occupies residues 23-80; that stretch reads HSSILKPPRSPLQDLKCGNQTNQEPNPPRKRKSSRRVSFADTIKVFQTESHMKTERNS. Residues Ser-24, Ser-32, and Ser-60 each carry the phosphoserine modification. Residues 124–140 are interaction with BUB1; the sequence is ENQMDLTASHTVMITKG. The tract at residues 160–179 is interaction with BUB1B; that stretch reads ENLKHHAANSRIKKDLACST. Ser-538 bears the Phosphoserine mark. Phosphothreonine is present on residues Thr-540 and Thr-739. The stretch at 723-827 is repeat 1; it reads DKTILFSEGN…MTKSHTVFID (105 aa). The tract at residues 723 to 1027 is 2 X 104 AA approximate repeats; that stretch reads DKTILFSEGN…VTRSHTVFID (305 aa). A phosphoserine mark is found at Ser-794 and Ser-878. Repeat unit 2 spans residues 923 to 1027; the sequence is KSITFPENDK…VTRSHTVFID (105 aa). Phosphoserine is present on residues Ser-1243 and Ser-1464. The disordered stretch occupies residues 1557–1583; it reads SQRESLPSENKTENCRAQKRTRVEEND. Basic and acidic residues predominate over residues 1566 to 1583; that stretch reads NKTENCRAQKRTRVEEND. A Nuclear localization signal motif is present at residues 1577–1590; sequence TRVEENDVTNEKKI. Ser-1616, Ser-1627, and Ser-1642 each carry phosphoserine. The segment at 1763-1890 is required for interaction with ZWINT; that stretch reads KVKDYSDEEL…FLEVETQKTQ (128 aa). Residues 1799–1890 adopt a coiled-coil conformation; that stretch reads VALYNKLVHS…FLEVETQKTQ (92 aa). Positions 1873-2093 are interaction with NSL1, DSN1 and required for assembly into the outer kinetochore; the sequence is EEEELQRKFL…GKTGHDEIAA (221 aa).

In terms of assembly, component of the KNL1 complex composed of KNL1 and ZWINT. Part of the ten-subunit outer kinetochore KMN network that includes the KNL1, MIS12 and NDC80 complexes; a bioriented kinetochore contains approximately 150 copies of the network. Interacts (via C-terminus) with the MIS12 complex subunits NSL1 (via C-terminus), PMF1 and DSN1; the interaction is direct. Interacts (via N-terminal region) with BUB1B (via BUB1 N-terminal domain); the interaction is direct and is required for cell cycle arrest upon activation of the mitotic spindle assembly checkpoint. Interacts (via N-terminal region) with BUB1 (via BUB1 N-terminal domain); the interaction is direct. Interacts with the protein phosphatase PP1 subunit PPP1CA; the interaction is direct and mutually exclusive with binding to microtubules. Interacts with the protein phosphatase PP1 subunit PPP1CC; the interaction is direct and mutually exclusive with binding to microtubules. Post-translationally, phosphorylation by AURKB negatively regulates its interaction with protein phosphatase 1 (PP1) subunit PPP1CA and with microtubules. Expressed in oocytes during meiotic progression (at protein level). Expressed during spermatogenesis.

The protein localises to the nucleus. It is found in the chromosome. The protein resides in the centromere. Its subcellular location is the kinetochore. It localises to the cytoplasm. Its function is as follows. Acts as a component of the outer kinetochore KNL1 complex that serves as a docking point for spindle assembly checkpoint components and mediates microtubule-kinetochore interactions. Kinetochores, consisting of a centromere-associated inner segment and a microtubule-contacting outer segment, play a crucial role in chromosome segregation by mediating the physical connection between centromeric DNA and spindle microtubules. The outer kinetochore is made up of the ten-subunit KMN network, comprising the MIS12, NDC80 and KNL1 complexes, and auxiliary microtubule-associated components; together they connect the outer kinetochore with the inner kinetochore, bind microtubules, and mediate interactions with mitotic checkpoint proteins that delay anaphase until chromosomes are bioriented on the spindle. Required for kinetochore binding by a distinct subset of kMAPs (kinetochore-bound microtubule-associated proteins) and motors. Acts in coordination with CENPK to recruit the NDC80 complex to the outer kinetochore. Can bind either to microtubules or to the protein phosphatase 1 (PP1) catalytic subunits PPP1CA and PPP1CC (via overlapping binding sites), it has higher affinity for PP1. Recruits MAD2L1 to the kinetochore and also directly links BUB1 and BUB1B to the kinetochore. In addition to orienting mitotic chromosomes, it is also essential for alignment of homologous chromosomes during meiotic metaphase I. In meiosis I, required to activate the spindle assembly checkpoint at unattached kinetochores to correct erroneous kinetochore-microtubule attachments. This Mus musculus (Mouse) protein is Outer kinetochore KNL1 complex subunit KNL1.